A 117-amino-acid chain; its full sequence is Large ribosomal subunit protein uL18 (117 aa).

Belongs to the universal ribosomal protein uL18 family. As to quaternary structure, part of the 50S ribosomal subunit; part of the 5S rRNA/L5/L18/L25 subcomplex. Contacts the 5S and 23S rRNAs.

In terms of biological role, this is one of the proteins that bind and probably mediate the attachment of the 5S RNA into the large ribosomal subunit, where it forms part of the central protuberance. In Nitrosococcus oceani (strain ATCC 19707 / BCRC 17464 / JCM 30415 / NCIMB 11848 / C-107), this protein is Large ribosomal subunit protein uL18.